The following is a 317-amino-acid chain: Porphobilinogen deaminase (317 aa).

An S-(dipyrrolylmethanemethyl)cysteine modification is found at Cys-245.

The protein belongs to the HMBS family. Monomer. Dipyrromethane is required as a cofactor.

It catalyses the reaction 4 porphobilinogen + H2O = hydroxymethylbilane + 4 NH4(+). Its pathway is porphyrin-containing compound metabolism; protoporphyrin-IX biosynthesis; coproporphyrinogen-III from 5-aminolevulinate: step 2/4. It functions in the pathway porphyrin-containing compound metabolism; chlorophyll biosynthesis. Tetrapolymerization of the monopyrrole PBG into the hydroxymethylbilane pre-uroporphyrinogen in several discrete steps. This Prochlorococcus marinus (strain MIT 9313) protein is Porphobilinogen deaminase.